The chain runs to 682 residues: Potassium-transporting ATPase ATP-binding subunit (682 aa).

5 helical membrane passes run 15-35 (AALFDAAVLVAAMRAAFAKLA), 42-62 (SPVMAVVMGGTVLAAVITASG), 66-86 (AGFGWAVTAILFVTVLFGNFA), 233-253 (LTFLIVVASLPAIAGFVGVTL), and 257-277 (LLIALLVCLIPTTIGGLLPAI). Asp-310 serves as the catalytic 4-aspartylphosphate intermediate. ATP is bound by residues Asp-347, Glu-351, 377-384 (FTAQTRMS), and Lys-395. The Mg(2+) site is built by Asp-518 and Asp-522. The next 3 membrane-spanning stretches (helical) occupy residues 588 to 608 (FAILPALFAAAIPSMAALNVM), 616 to 636 (AVLAALIFNALIIPALIPLAL), and 662 to 682 (VLLPFAAIKAIDLALVAVLGA).

This sequence belongs to the cation transport ATPase (P-type) (TC 3.A.3) family. Type IA subfamily. As to quaternary structure, the system is composed of three essential subunits: KdpA, KdpB and KdpC.

The protein resides in the cell inner membrane. The catalysed reaction is K(+)(out) + ATP + H2O = K(+)(in) + ADP + phosphate + H(+). In terms of biological role, part of the high-affinity ATP-driven potassium transport (or Kdp) system, which catalyzes the hydrolysis of ATP coupled with the electrogenic transport of potassium into the cytoplasm. This subunit is responsible for energy coupling to the transport system and for the release of the potassium ions to the cytoplasm. The sequence is that of Potassium-transporting ATPase ATP-binding subunit from Xanthomonas axonopodis pv. citri (strain 306).